The following is a 278-amino-acid chain: MDIKAYFELIRLKNCLTASFGAFIGGLIASYFNLAMVDNLILASIVVFLVCGFGNALNDIYDLKIDRINKPKRPIPSKRITLNNAKVFSYSLVVMGLFISLFNISCFLMAVLNSIVLQQYASTYKKNKIIGNLIVAYLTGSVFIFGGIAVGNIDVTIMLFLCALFAMWSREIIKDYEDIEGDLKEKVISIPIKCGERSIYIAAFLLIFAIFLSPLPYLFGFFGIYYMISVVFCDLLFLFGIYKLVFNPSKMEAKKASRNIKIVTNLVLIAFLIGSLFK.

8 consecutive transmembrane segments (helical) span residues 12 to 32, 34 to 54, 92 to 112, 129 to 149, 153 to 173, 204 to 224, 226 to 246, and 257 to 277; these read LKNC…ASYF, LAMV…CGFG, LVVM…MAVL, IIGN…GGIA, IDVT…REII, FLLI…FFGI, YMIS…KLVF, and SRNI…GSLF.

The protein belongs to the UbiA prenyltransferase family. DGGGP synthase subfamily. Requires Mg(2+) as cofactor.

The protein localises to the cell membrane. It catalyses the reaction sn-3-O-(geranylgeranyl)glycerol 1-phosphate + (2E,6E,10E)-geranylgeranyl diphosphate = 2,3-bis-O-(geranylgeranyl)-sn-glycerol 1-phosphate + diphosphate. Its pathway is membrane lipid metabolism; glycerophospholipid metabolism. Prenyltransferase that catalyzes the transfer of the geranylgeranyl moiety of geranylgeranyl diphosphate (GGPP) to the C2 hydroxyl of (S)-3-O-geranylgeranylglyceryl phosphate (GGGP). This reaction is the second ether-bond-formation step in the biosynthesis of archaeal membrane lipids. This chain is Digeranylgeranylglyceryl phosphate synthase, found in Methanococcus maripaludis (strain DSM 14266 / JCM 13030 / NBRC 101832 / S2 / LL).